The chain runs to 255 residues: Hydroxyacylglutathione hydrolase (255 aa).

Zn(2+)-binding residues include His-55, His-57, Asp-59, His-60, His-112, Asp-129, and His-167.

This sequence belongs to the metallo-beta-lactamase superfamily. Glyoxalase II family. Monomer. Zn(2+) is required as a cofactor.

The enzyme catalyses an S-(2-hydroxyacyl)glutathione + H2O = a 2-hydroxy carboxylate + glutathione + H(+). It participates in secondary metabolite metabolism; methylglyoxal degradation; (R)-lactate from methylglyoxal: step 2/2. In terms of biological role, thiolesterase that catalyzes the hydrolysis of S-D-lactoyl-glutathione to form glutathione and D-lactic acid. In Halorhodospira halophila (strain DSM 244 / SL1) (Ectothiorhodospira halophila (strain DSM 244 / SL1)), this protein is Hydroxyacylglutathione hydrolase.